The following is a 560-amino-acid chain: Phosphoglucomutase 1 (560 aa).

R24 and S116 together coordinate alpha-D-glucose 1,6-bisphosphate. S116 acts as the Phosphoserine intermediate in catalysis. Residues S116, D288, D290, and D292 each contribute to the Mg(2+) site. Residue S116 is modified to Phosphoserine. Positions 292, 293, 357, 376, 378, and 389 each coordinate alpha-D-glucose 1,6-bisphosphate.

Belongs to the phosphohexose mutase family. In terms of assembly, monomer. It depends on Mg(2+) as a cofactor. Localized primarily to fat bodies in third instar larvae.

It catalyses the reaction alpha-D-glucose 1-phosphate = alpha-D-glucose 6-phosphate. The catalysed reaction is O-phospho-L-seryl-[protein] + alpha-D-glucose 1-phosphate = alpha-D-glucose 1,6-bisphosphate + L-seryl-[protein]. The enzyme catalyses alpha-D-glucose 1,6-bisphosphate + L-seryl-[protein] = O-phospho-L-seryl-[protein] + alpha-D-glucose 6-phosphate. Catalyzes the reversible isomerization of alpha-D-glucose 1-phosphate to alpha-D-glucose 6-phosphate. The mechanism proceeds via the intermediate compound alpha-D-glucose 1,6-bisphosphate. This enzyme participates in both the breakdown and synthesis of glucose. Enzyme of the glycolytic pathway. Glycolysis is essential in glial cells but not in neurons; neurons rely on the citric acid cycle for their energy needs, and on lactate and alanine secreted into the hemolymph by glial cells to fuel it. The polypeptide is Phosphoglucomutase 1 (Drosophila melanogaster (Fruit fly)).